A 614-amino-acid polypeptide reads, in one-letter code: uncharacterized protein (614 aa).

The tract at residues Tyr-23–Pro-68 is disordered. Polar residues predominate over residues Lys-49–Pro-68.

The protein to C.trachomatis CT875.

This is an uncharacterized protein from Chlamydia muridarum (strain MoPn / Nigg).